The chain runs to 240 residues: UDP-2,3-diacylglucosamine hydrolase (240 aa).

Residues D8, H10, D41, N79, and H114 each contribute to the Mn(2+) site. 79–80 provides a ligand contact to substrate; the sequence is NR. Substrate is bound by residues D122, S160, N164, K167, and H195. Positions 195 and 197 each coordinate Mn(2+).

This sequence belongs to the LpxH family. Mn(2+) serves as cofactor.

It localises to the cell inner membrane. The catalysed reaction is UDP-2-N,3-O-bis[(3R)-3-hydroxytetradecanoyl]-alpha-D-glucosamine + H2O = 2-N,3-O-bis[(3R)-3-hydroxytetradecanoyl]-alpha-D-glucosaminyl 1-phosphate + UMP + 2 H(+). The protein operates within glycolipid biosynthesis; lipid IV(A) biosynthesis; lipid IV(A) from (3R)-3-hydroxytetradecanoyl-[acyl-carrier-protein] and UDP-N-acetyl-alpha-D-glucosamine: step 4/6. In terms of biological role, hydrolyzes the pyrophosphate bond of UDP-2,3-diacylglucosamine to yield 2,3-diacylglucosamine 1-phosphate (lipid X) and UMP by catalyzing the attack of water at the alpha-P atom. Involved in the biosynthesis of lipid A, a phosphorylated glycolipid that anchors the lipopolysaccharide to the outer membrane of the cell. The sequence is that of UDP-2,3-diacylglucosamine hydrolase from Shigella boydii serotype 18 (strain CDC 3083-94 / BS512).